A 60-amino-acid polypeptide reads, in one-letter code: Homeobox protein engrailed-like A (60 aa).

A DNA-binding region (homeobox) is located at residues 1-41 (ADQLARLRAEFQANRYLTEERRQNLARELSLNEAQIKIWFQ).

The protein belongs to the engrailed homeobox family.

Its subcellular location is the nucleus. This Myxine glutinosa (Atlantic hagfish) protein is Homeobox protein engrailed-like A.